We begin with the raw amino-acid sequence, 467 residues long: ATP synthase subunit beta (467 aa).

Residue 156-163 (GGAGVGKT) coordinates ATP.

This sequence belongs to the ATPase alpha/beta chains family. As to quaternary structure, F-type ATPases have 2 components, CF(1) - the catalytic core - and CF(0) - the membrane proton channel. CF(1) has five subunits: alpha(3), beta(3), gamma(1), delta(1), epsilon(1). CF(0) has three main subunits: a(1), b(2) and c(9-12). The alpha and beta chains form an alternating ring which encloses part of the gamma chain. CF(1) is attached to CF(0) by a central stalk formed by the gamma and epsilon chains, while a peripheral stalk is formed by the delta and b chains.

The protein resides in the cell membrane. The enzyme catalyses ATP + H2O + 4 H(+)(in) = ADP + phosphate + 5 H(+)(out). Produces ATP from ADP in the presence of a proton gradient across the membrane. The catalytic sites are hosted primarily by the beta subunits. This is ATP synthase subunit beta from Cytobacillus firmus (Bacillus firmus).